The primary structure comprises 686 residues: Band 4.1-like protein 4A (686 aa).

The FERM domain occupies 11–299; the sequence is FYCEVLLLDE…EHHTFFRMPE (289 aa). Ser304 carries the post-translational modification Phosphoserine. The interval 331 to 686 is disordered; that stretch reads RDLSIQLPRP…IQASRLKTET (356 aa). Residues 357–376 are compositionally biased toward polar residues; sequence AQTQPAESNSISRITANMEN. Phosphoserine is present on residues Ser389, Ser393, and Ser402. Polar residues predominate over residues 418 to 428; sequence GPQSGLYNSPS. Residues 479–489 show a composition bias toward low complexity; sequence RCNTSSGSESE. Basic and acidic residues-rich tracts occupy residues 518 to 527 and 547 to 561; these read VLRRQKEKNQ and QAKEELWKHIQKELV. A compositionally biased stretch (basic residues) spans 588 to 601; sequence IRHSHSPRSYRQYR. Residues 648–658 are compositionally biased toward basic and acidic residues; sequence GSKDSLMEEKP. A compositionally biased stretch (polar residues) spans 673-686; the sequence is TIKTIQASRLKTET.

As to expression, expressed in many tissues. High levels of expression in brain, liver, thymus and peripheral blood leukocytes and low levels of expression in heart, kidney, testis and colon.

The protein localises to the cytoplasm. The protein resides in the cytoskeleton. In Homo sapiens (Human), this protein is Band 4.1-like protein 4A.